The chain runs to 142 residues: Sec-independent protein translocase protein TatB (142 aa).

A helical transmembrane segment spans residues 2–22; that stretch reads FANVGWGEMLVLVIAGLVILG. The interval 89 to 142 is disordered; that stretch reads DDSIFTGKFDQNGKSEKPEQKPEKPQSAPGPAAAVPDQPAGGRSGSTPYDTDAT. Basic and acidic residues predominate over residues 99-112; sequence QNGKSEKPEQKPEK. Positions 133–142 are enriched in polar residues; sequence GSTPYDTDAT.

It belongs to the TatB family. The Tat system comprises two distinct complexes: a TatABC complex, containing multiple copies of TatA, TatB and TatC subunits, and a separate TatA complex, containing only TatA subunits. Substrates initially bind to the TatABC complex, which probably triggers association of the separate TatA complex to form the active translocon.

The protein localises to the cell membrane. Part of the twin-arginine translocation (Tat) system that transports large folded proteins containing a characteristic twin-arginine motif in their signal peptide across membranes. Together with TatC, TatB is part of a receptor directly interacting with Tat signal peptides. TatB may form an oligomeric binding site that transiently accommodates folded Tat precursor proteins before their translocation. This is Sec-independent protein translocase protein TatB from Mycolicibacterium vanbaalenii (strain DSM 7251 / JCM 13017 / BCRC 16820 / KCTC 9966 / NRRL B-24157 / PYR-1) (Mycobacterium vanbaalenii).